A 180-amino-acid polypeptide reads, in one-letter code: Large ribosomal subunit protein uL5 (180 aa).

Belongs to the universal ribosomal protein uL5 family. In terms of assembly, part of the 50S ribosomal subunit; part of the 5S rRNA/L5/L18/L25 subcomplex. Contacts the 5S rRNA and the P site tRNA. Forms a bridge to the 30S subunit in the 70S ribosome.

This is one of the proteins that bind and probably mediate the attachment of the 5S RNA into the large ribosomal subunit, where it forms part of the central protuberance. In the 70S ribosome it contacts protein S13 of the 30S subunit (bridge B1b), connecting the 2 subunits; this bridge is implicated in subunit movement. Contacts the P site tRNA; the 5S rRNA and some of its associated proteins might help stabilize positioning of ribosome-bound tRNAs. This chain is Large ribosomal subunit protein uL5, found in Roseiflexus castenholzii (strain DSM 13941 / HLO8).